We begin with the raw amino-acid sequence, 340 residues long: Selenide, water dikinase (340 aa).

The active site involves Sec-17. A non-standard amino acid (selenocysteine) is located at residue Sec-17. ATP contacts are provided by residues Lys-20 and 45–47 (NNE). Residue Asp-48 participates in Mg(2+) binding. ATP is bound by residues Asp-65, Asp-88, and 136–138 (GHT). Asp-88 lines the Mg(2+) pocket. Asp-224 contacts Mg(2+).

It belongs to the selenophosphate synthase 1 family. Class I subfamily. As to quaternary structure, homodimer. Requires Mg(2+) as cofactor.

It carries out the reaction hydrogenselenide + ATP + H2O = selenophosphate + AMP + phosphate + 2 H(+). Functionally, synthesizes selenophosphate from selenide and ATP. In Campylobacter jejuni (strain RM1221), this protein is Selenide, water dikinase.